The chain runs to 812 residues: Probable inorganic carbon transporter subunit DabA (812 aa).

Residues C338, D340, H498, and C513 each coordinate Zn(2+).

Belongs to the inorganic carbon transporter (TC 9.A.2) DabA family. As to quaternary structure, forms a complex with DabB. Requires Zn(2+) as cofactor.

Its subcellular location is the cell inner membrane. Functionally, part of an energy-coupled inorganic carbon pump. This Methylobacterium sp. (strain 4-46) protein is Probable inorganic carbon transporter subunit DabA.